A 924-amino-acid polypeptide reads, in one-letter code: Type II inositol 3,4-bisphosphate 4-phosphatase (924 aa).

Basic and acidic residues predominate over residues 1–13 (MEIKEEGASEEGQ). 3 disordered regions span residues 1 to 25 (MEIK…SDPG), 481 to 516 (ILKK…HSDY), and 546 to 569 (DGGS…DAIP). Positions 23–165 (DPGDCQFTSI…LKSKEQLLVL (143 aa)) constitute a C2 domain.

Belongs to the inositol 3,4-bisphosphate 4-phosphatase family.

The catalysed reaction is a 1,2-diacyl-sn-glycero-3-phospho-(1D-myo-inositol-3,4-bisphosphate) + H2O = a 1,2-diacyl-sn-glycero-3-phospho-(1D-myo-inositol-3-phosphate) + phosphate. It catalyses the reaction 1D-myo-inositol 1,3,4-trisphosphate + H2O = 1D-myo-inositol 1,3-bisphosphate + phosphate. It carries out the reaction 1D-myo-inositol 3,4-bisphosphate + H2O = 1D-myo-inositol 3-phosphate + phosphate. It functions in the pathway signal transduction; phosphatidylinositol signaling pathway. Its activity is regulated as follows. Strongly inhibited by inositol hexakisphosphate. Functionally, catalyzes the hydrolysis of the 4-position phosphate of phosphatidylinositol 3,4-bisphosphate, inositol 1,3,4-trisphosphate and inositol 3,4-bisphosphate. Plays a role in the late stages of macropinocytosis by dephosphorylating phosphatidylinositol 3,4-bisphosphate in membrane ruffles. Antagonizes the PI3K-AKT/PKB signaling pathway by dephosphorylating phosphoinositides and thereby modulating cell cycle progression and cell survival. This chain is Type II inositol 3,4-bisphosphate 4-phosphatase (INPP4B), found in Pongo abelii (Sumatran orangutan).